A 609-amino-acid polypeptide reads, in one-letter code: NURS complex subunit pir2 (609 aa).

Residues 1–25 (MSEVHQESEVEYSRWKRERSPERSQ) show a composition bias toward basic and acidic residues. Disordered regions lie at residues 1–60 (MSEV…RASG) and 187–210 (EKPS…QLSK). Residues 27–36 (RSQSPPGEQS) show a composition bias toward low complexity. Phosphoserine occurs at positions 28 and 30. Over residues 37–57 (AYHRERSPLRKRGNYYDDRTR) the composition is skewed to basic and acidic residues. Polar residues predominate over residues 201–210 (LPSNDPQLSK). The C2H2-type zinc-finger motif lies at 474–499 (YRCHVGTCAKLFLGPEFVRKHINKKH).

It belongs to the ARS2 family. As to quaternary structure, interacts with ccr4.

The protein localises to the nucleus. The polypeptide is NURS complex subunit pir2 (Schizosaccharomyces pombe (strain 972 / ATCC 24843) (Fission yeast)).